The following is a 56-amino-acid chain: Ribosome modulation factor (56 aa).

The protein belongs to the ribosome modulation factor family.

It is found in the cytoplasm. Functionally, during stationary phase, converts 70S ribosomes to an inactive dimeric form (100S ribosomes). In Proteus mirabilis (strain HI4320), this protein is Ribosome modulation factor.